A 717-amino-acid polypeptide reads, in one-letter code: Transport/processing ATP-binding protein ComA (717 aa).

In terms of domain architecture, Peptidase C39 spans 11–138; sequence QVDQMDCGVA…EEWTGVTLFM (128 aa). Residue Cys-17 is part of the active site. The next 6 membrane-spanning stretches (helical) occupy residues 166 to 186, 205 to 225, 237 to 257, 282 to 302, 306 to 326, and 397 to 417; these read GLIA…IVGS, LGII…LSYA, LSID…MSFF, TILS…VLFS, NLFF…FAFM, and VAHL…VMDG. An ABC transmembrane type-1 domain is found at 168-450; that stretch reads IANIVLATLL…IINLQTKLQT (283 aa). In terms of domain architecture, ABC transporter spans 484-717; that stretch reads MTFKQVHYKY…GGFYAHLVNS (234 aa). 517 to 524 provides a ligand contact to ATP; the sequence is GISGSGKT.

The protein belongs to the ABC transporter superfamily. Competence factor exporter (TC 3.A.1.112.1) family.

It is found in the cell membrane. In terms of biological role, required for induction of competence. Seems to transport the competence-stimulating peptide (CSP). The protein is Transport/processing ATP-binding protein ComA (comA) of Streptococcus pneumoniae serotype 4 (strain ATCC BAA-334 / TIGR4).